Consider the following 392-residue polypeptide: Formate-dependent phosphoribosylglycinamide formyltransferase (392 aa).

Residues 22-23 and glutamate 82 contribute to the N(1)-(5-phospho-beta-D-ribosyl)glycinamide site; that span reads EL. ATP-binding positions include arginine 114, lysine 155, 160-165, 195-198, and glutamate 203; these read SSGKGQ and EGVV. Positions 119–308 constitute an ATP-grasp domain; it reads RLAAEELQLP…EFALHVRAFL (190 aa). Mg(2+) is bound by residues glutamate 267 and glutamate 279. N(1)-(5-phospho-beta-D-ribosyl)glycinamide is bound by residues aspartate 286, lysine 355, and 362-363; that span reads RR.

This sequence belongs to the PurK/PurT family. As to quaternary structure, homodimer.

It catalyses the reaction N(1)-(5-phospho-beta-D-ribosyl)glycinamide + formate + ATP = N(2)-formyl-N(1)-(5-phospho-beta-D-ribosyl)glycinamide + ADP + phosphate + H(+). It participates in purine metabolism; IMP biosynthesis via de novo pathway; N(2)-formyl-N(1)-(5-phospho-D-ribosyl)glycinamide from N(1)-(5-phospho-D-ribosyl)glycinamide (formate route): step 1/1. Its function is as follows. Involved in the de novo purine biosynthesis. Catalyzes the transfer of formate to 5-phospho-ribosyl-glycinamide (GAR), producing 5-phospho-ribosyl-N-formylglycinamide (FGAR). Formate is provided by PurU via hydrolysis of 10-formyl-tetrahydrofolate. The protein is Formate-dependent phosphoribosylglycinamide formyltransferase of Shigella boydii serotype 4 (strain Sb227).